A 222-amino-acid chain; its full sequence is Cytochrome b6 (222 aa).

A helical membrane pass occupies residues 39-59; sequence IFYCLGGLTLTCFLIQFATGF. Residue Tyr41 participates in heme b binding. A heme c-binding site is contributed by Cys42. Positions 90, 93, 94, 107, and 110 each coordinate heme b. 3 helical membrane-spanning segments follow: residues 97–117, 123–143, and 193–213; these read ASMMVLMMILHVFRVYLTGGF, LTWVVGVMLAVTTVTFGVTGY, and LHTFVLPWAIAVLLLLHFLMI. The heme b site is built by His194 and His209. The heme c site is built by Arg214 and Ile218. A heme b-binding site is contributed by Ser219.

It belongs to the cytochrome b family. PetB subfamily. In terms of assembly, the 4 large subunits of the cytochrome b6-f complex are cytochrome b6, subunit IV (17 kDa polypeptide, PetD), cytochrome f and the Rieske protein, while the 4 small subunits are PetG, PetL, PetM and PetN. The complex functions as a dimer. Requires heme b as cofactor. Heme c is required as a cofactor.

Its subcellular location is the cellular thylakoid membrane. Functionally, component of the cytochrome b6-f complex, which mediates electron transfer between photosystem II (PSII) and photosystem I (PSI), cyclic electron flow around PSI, and state transitions. The protein is Cytochrome b6 of Synechocystis sp. (strain ATCC 27184 / PCC 6803 / Kazusa).